The primary structure comprises 177 residues: tRNA (cytidine(56)-2'-O)-methyltransferase (177 aa).

Residues leucine 83 and 108-112 (GAEKV) contribute to the S-adenosyl-L-methionine site.

It belongs to the aTrm56 family. As to quaternary structure, homodimer.

Its subcellular location is the cytoplasm. The catalysed reaction is cytidine(56) in tRNA + S-adenosyl-L-methionine = 2'-O-methylcytidine(56) in tRNA + S-adenosyl-L-homocysteine + H(+). Functionally, specifically catalyzes the AdoMet-dependent 2'-O-ribose methylation of cytidine at position 56 in tRNAs. The chain is tRNA (cytidine(56)-2'-O)-methyltransferase from Nitrosopumilus maritimus (strain SCM1).